A 154-amino-acid polypeptide reads, in one-letter code: Large ribosomal subunit protein bL17 (154 aa).

A disordered region spans residues 127-154 (TAAKQDRAKRVKGSKKAETEKEGGESAE). Over residues 141–154 (KKAETEKEGGESAE) the composition is skewed to basic and acidic residues.

Belongs to the bacterial ribosomal protein bL17 family. Part of the 50S ribosomal subunit. Contacts protein L32.

This chain is Large ribosomal subunit protein bL17, found in Chlorobaculum parvum (strain DSM 263 / NCIMB 8327) (Chlorobium vibrioforme subsp. thiosulfatophilum).